A 638-amino-acid chain; its full sequence is 1-deoxy-D-xylulose-5-phosphate synthase (638 aa).

Residues His-79 and 120 to 122 each bind thiamine diphosphate; that span reads AHS. Asp-151 lines the Mg(2+) pocket. Thiamine diphosphate is bound by residues 152-153, Asn-180, Tyr-289, and Glu-371; that span reads GA. Asn-180 provides a ligand contact to Mg(2+).

It belongs to the transketolase family. DXPS subfamily. Homodimer. It depends on Mg(2+) as a cofactor. Thiamine diphosphate serves as cofactor.

It carries out the reaction D-glyceraldehyde 3-phosphate + pyruvate + H(+) = 1-deoxy-D-xylulose 5-phosphate + CO2. It participates in metabolic intermediate biosynthesis; 1-deoxy-D-xylulose 5-phosphate biosynthesis; 1-deoxy-D-xylulose 5-phosphate from D-glyceraldehyde 3-phosphate and pyruvate: step 1/1. Functionally, catalyzes the acyloin condensation reaction between C atoms 2 and 3 of pyruvate and glyceraldehyde 3-phosphate to yield 1-deoxy-D-xylulose-5-phosphate (DXP). The protein is 1-deoxy-D-xylulose-5-phosphate synthase of Rhizobium etli (strain CIAT 652).